We begin with the raw amino-acid sequence, 291 residues long: Potassium-transporting ATPase subunit beta (291 aa).

Residues 1–36 (MAALQEKKSCSQRMEEFRHYCWNPDTGQMLGRTLSR) lie on the Cytoplasmic side of the membrane. The chain crosses the membrane as a helical; Signal-anchor for type II membrane protein span at residues 37–57 (WVWISLYYVAFYVVMTGLFAL). Over 58–291 (CIYVLMQTID…KVEFKLKIQK (234 aa)) the chain is Extracellular. Residues Asn-99, Asn-103, Asn-130, Asn-146, and Asn-161 are each glycosylated (N-linked (GlcNAc...) asparagine). A disulfide bridge links Cys-131 with Cys-152. Residues Cys-162 and Cys-178 are joined by a disulfide bond. Asn-193 and Asn-222 each carry an N-linked (GlcNAc...) asparagine glycan. Positions 194–291 (STPPRVDCTF…KVEFKLKIQK (98 aa)) are immunoglobulin-like. Cys-201 and Cys-263 are joined by a disulfide.

The protein belongs to the X(+)/potassium ATPases subunit beta family. In terms of assembly, the ATPase pump is composed of two subunits: alpha (catalytic) and beta (regulatory). Interacts with alpha subunit ATP12A; this interaction is required for the formation of a functionally active pump and targeting at the plasma membrane. Interacts (via N-terminus) with alpha subunit ATP4A (via the P-domain). Post-translationally, N-glycosylation is necessary for assembly and functional expression of the pump at the plasma membrane.

The protein resides in the apical cell membrane. Its subcellular location is the cell membrane. Its function is as follows. The beta subunit of the gastric H(+)/K(+) ATPase pump which transports H(+) ions in exchange for K(+) ions across the apical membrane of parietal cells. Plays a structural and regulatory role in the assembly and membrane targeting of a functionally active pump. Within a transport cycle, the transfer of a H(+) ion across the membrane is coupled to ATP hydrolysis and is associated with a transient phosphorylation of the alpha subunit that shifts the pump conformation from inward-facing (E1) to outward-facing state (E2). Interacts with the phosphorylation domain of the alpha subunit and functions as a ratchet, stabilizing the lumenal-open E2 conformation and preventing the reverse reaction of the transport cycle. This Oryctolagus cuniculus (Rabbit) protein is Potassium-transporting ATPase subunit beta (ATP4B).